The primary structure comprises 479 residues: GMP reductase (479 aa).

2 CBS domains span residues Val-96 to Ile-153 and Ala-154 to Ser-212. NADP(+) contacts are provided by residues Asp-246–Ala-248 and Gly-296–Gly-298. Cys-303 (thioimidate intermediate) is an active-site residue.

It belongs to the IMPDH/GMPR family. GuaB1 subfamily. Requires a monovalent cation as cofactor.

The catalysed reaction is IMP + NH4(+) + NADP(+) = GMP + NADPH + 2 H(+). It participates in purine metabolism; IMP biosynthesis via salvage pathway. Involved in the purine-salvage pathway. Catalyzes the NADPH-dependent conversion of GMP to IMP. The polypeptide is GMP reductase (Mycobacterium bovis (strain ATCC BAA-935 / AF2122/97)).